Here is a 173-residue protein sequence, read N- to C-terminus: Crossover junction endodeoxyribonuclease RuvC (173 aa).

Active-site residues include Asp-8, Glu-67, and Asp-139. Residues Asp-8, Glu-67, and Asp-139 each contribute to the Mg(2+) site.

This sequence belongs to the RuvC family. In terms of assembly, homodimer which binds Holliday junction (HJ) DNA. The HJ becomes 2-fold symmetrical on binding to RuvC with unstacked arms; it has a different conformation from HJ DNA in complex with RuvA. In the full resolvosome a probable DNA-RuvA(4)-RuvB(12)-RuvC(2) complex forms which resolves the HJ. It depends on Mg(2+) as a cofactor.

The protein resides in the cytoplasm. The catalysed reaction is Endonucleolytic cleavage at a junction such as a reciprocal single-stranded crossover between two homologous DNA duplexes (Holliday junction).. The RuvA-RuvB-RuvC complex processes Holliday junction (HJ) DNA during genetic recombination and DNA repair. Endonuclease that resolves HJ intermediates. Cleaves cruciform DNA by making single-stranded nicks across the HJ at symmetrical positions within the homologous arms, yielding a 5'-phosphate and a 3'-hydroxyl group; requires a central core of homology in the junction. The consensus cleavage sequence is 5'-(A/T)TT(C/G)-3'. Cleavage occurs on the 3'-side of the TT dinucleotide at the point of strand exchange. HJ branch migration catalyzed by RuvA-RuvB allows RuvC to scan DNA until it finds its consensus sequence, where it cleaves and resolves the cruciform DNA. The sequence is that of Crossover junction endodeoxyribonuclease RuvC from Serratia proteamaculans (strain 568).